Reading from the N-terminus, the 627-residue chain is DNA mismatch repair protein MutL (627 aa).

The protein belongs to the DNA mismatch repair MutL/HexB family.

Functionally, this protein is involved in the repair of mismatches in DNA. It is required for dam-dependent methyl-directed DNA mismatch repair. May act as a 'molecular matchmaker', a protein that promotes the formation of a stable complex between two or more DNA-binding proteins in an ATP-dependent manner without itself being part of a final effector complex. This is DNA mismatch repair protein MutL from Mesorhizobium japonicum (strain LMG 29417 / CECT 9101 / MAFF 303099) (Mesorhizobium loti (strain MAFF 303099)).